Reading from the N-terminus, the 71-residue chain is MAKWILLIVALLVLSHVPPGSTEFKRCWNGQGACRTFCTRQETFMHLCPDASLCCLSYSFKPSRPSRVGDV.

An N-terminal signal peptide occupies residues 1–22 (MAKWILLIVALLVLSHVPPGST). 3 cysteine pairs are disulfide-bonded: Cys-27-Cys-54, Cys-34-Cys-48, and Cys-38-Cys-55.

It belongs to the beta-defensin family.

It localises to the secreted. In terms of biological role, has antibacterial activity. The sequence is that of Beta-defensin 25 (Defb25) from Mus musculus (Mouse).